The chain runs to 247 residues: Carboxy-S-adenosyl-L-methionine synthase (247 aa).

Residues Y39, 64 to 66 (GCS), 89 to 90 (DN), 117 to 118 (DI), N132, and R199 contribute to the S-adenosyl-L-methionine site.

This sequence belongs to the class I-like SAM-binding methyltransferase superfamily. Cx-SAM synthase family. In terms of assembly, homodimer.

The catalysed reaction is prephenate + S-adenosyl-L-methionine = carboxy-S-adenosyl-L-methionine + 3-phenylpyruvate + H2O. In terms of biological role, catalyzes the conversion of S-adenosyl-L-methionine (SAM) to carboxy-S-adenosyl-L-methionine (Cx-SAM). This chain is Carboxy-S-adenosyl-L-methionine synthase, found in Klebsiella pneumoniae (strain 342).